The sequence spans 349 residues: Holliday junction branch migration complex subunit RuvB (349 aa).

The span at 1–15 (MSDDYRETDPTRQPE) shows a compositional bias: basic and acidic residues. A disordered region spans residues 1–25 (MSDDYRETDPTRQPEDMGEGSLRPE). A large ATPase domain (RuvB-L) region spans residues 1–183 (MSDDYRETDP…FGIPLRLVFY (183 aa)). ATP is bound by residues leucine 22, arginine 23, glycine 64, lysine 67, threonine 68, threonine 69, 130-132 (EDF), arginine 173, tyrosine 183, and arginine 220. Residue threonine 68 participates in Mg(2+) binding. The segment at 184-254 (TPEELRAIVS…LADAALGRLE (71 aa)) is small ATPAse domain (RuvB-S). The head domain (RuvB-H) stretch occupies residues 257 to 349 (ERGLDAMDRR…SSLEQDDSAP (93 aa)). Residues arginine 293, arginine 312, and arginine 317 each coordinate DNA.

Belongs to the RuvB family. Homohexamer. Forms an RuvA(8)-RuvB(12)-Holliday junction (HJ) complex. HJ DNA is sandwiched between 2 RuvA tetramers; dsDNA enters through RuvA and exits via RuvB. An RuvB hexamer assembles on each DNA strand where it exits the tetramer. Each RuvB hexamer is contacted by two RuvA subunits (via domain III) on 2 adjacent RuvB subunits; this complex drives branch migration. In the full resolvosome a probable DNA-RuvA(4)-RuvB(12)-RuvC(2) complex forms which resolves the HJ.

The protein localises to the cytoplasm. The enzyme catalyses ATP + H2O = ADP + phosphate + H(+). Functionally, the RuvA-RuvB-RuvC complex processes Holliday junction (HJ) DNA during genetic recombination and DNA repair, while the RuvA-RuvB complex plays an important role in the rescue of blocked DNA replication forks via replication fork reversal (RFR). RuvA specifically binds to HJ cruciform DNA, conferring on it an open structure. The RuvB hexamer acts as an ATP-dependent pump, pulling dsDNA into and through the RuvAB complex. RuvB forms 2 homohexamers on either side of HJ DNA bound by 1 or 2 RuvA tetramers; 4 subunits per hexamer contact DNA at a time. Coordinated motions by a converter formed by DNA-disengaged RuvB subunits stimulates ATP hydrolysis and nucleotide exchange. Immobilization of the converter enables RuvB to convert the ATP-contained energy into a lever motion, pulling 2 nucleotides of DNA out of the RuvA tetramer per ATP hydrolyzed, thus driving DNA branch migration. The RuvB motors rotate together with the DNA substrate, which together with the progressing nucleotide cycle form the mechanistic basis for DNA recombination by continuous HJ branch migration. Branch migration allows RuvC to scan DNA until it finds its consensus sequence, where it cleaves and resolves cruciform DNA. This is Holliday junction branch migration complex subunit RuvB from Gluconobacter oxydans (strain 621H) (Gluconobacter suboxydans).